The primary structure comprises 89 residues: Small ribosomal subunit protein uS17 (89 aa).

Belongs to the universal ribosomal protein uS17 family. Part of the 30S ribosomal subunit.

Functionally, one of the primary rRNA binding proteins, it binds specifically to the 5'-end of 16S ribosomal RNA. The polypeptide is Small ribosomal subunit protein uS17 (Coxiella burnetii (strain Dugway 5J108-111)).